We begin with the raw amino-acid sequence, 352 residues long: Holliday junction branch migration complex subunit RuvB (352 aa).

Residues 5-191 are large ATPase domain (RuvB-L); sequence TDDFSEQRII…FGIVARLEFY (187 aa). ATP contacts are provided by residues Leu-30, Arg-31, Gly-72, Lys-75, Thr-76, Thr-77, 138-140, Arg-181, Tyr-191, and Arg-228; that span reads EDY. Thr-76 contacts Mg(2+). The segment at 192 to 262 is small ATPAse domain (RuvB-S); the sequence is TPLELTKIVT…MADAALVMLD (71 aa). The segment at 265 to 352 is head domain (RuvB-H); that stretch reads PVGFDLMDRK…GPNGDLWAGQ (88 aa). DNA contacts are provided by Arg-301, Arg-320, and Arg-325.

This sequence belongs to the RuvB family. Homohexamer. Forms an RuvA(8)-RuvB(12)-Holliday junction (HJ) complex. HJ DNA is sandwiched between 2 RuvA tetramers; dsDNA enters through RuvA and exits via RuvB. An RuvB hexamer assembles on each DNA strand where it exits the tetramer. Each RuvB hexamer is contacted by two RuvA subunits (via domain III) on 2 adjacent RuvB subunits; this complex drives branch migration. In the full resolvosome a probable DNA-RuvA(4)-RuvB(12)-RuvC(2) complex forms which resolves the HJ.

The protein resides in the cytoplasm. It catalyses the reaction ATP + H2O = ADP + phosphate + H(+). Functionally, the RuvA-RuvB-RuvC complex processes Holliday junction (HJ) DNA during genetic recombination and DNA repair, while the RuvA-RuvB complex plays an important role in the rescue of blocked DNA replication forks via replication fork reversal (RFR). RuvA specifically binds to HJ cruciform DNA, conferring on it an open structure. The RuvB hexamer acts as an ATP-dependent pump, pulling dsDNA into and through the RuvAB complex. RuvB forms 2 homohexamers on either side of HJ DNA bound by 1 or 2 RuvA tetramers; 4 subunits per hexamer contact DNA at a time. Coordinated motions by a converter formed by DNA-disengaged RuvB subunits stimulates ATP hydrolysis and nucleotide exchange. Immobilization of the converter enables RuvB to convert the ATP-contained energy into a lever motion, pulling 2 nucleotides of DNA out of the RuvA tetramer per ATP hydrolyzed, thus driving DNA branch migration. The RuvB motors rotate together with the DNA substrate, which together with the progressing nucleotide cycle form the mechanistic basis for DNA recombination by continuous HJ branch migration. Branch migration allows RuvC to scan DNA until it finds its consensus sequence, where it cleaves and resolves cruciform DNA. In Janthinobacterium sp. (strain Marseille) (Minibacterium massiliensis), this protein is Holliday junction branch migration complex subunit RuvB.